A 106-amino-acid chain; its full sequence is Minor capsid protein VP2 (106 aa).

Belongs to the vesivirus VP2 protein family. In terms of assembly, homooligomer. The portal-like structure consists in 12 copies of VP2. Interacts with capsid protein VP1.

Its subcellular location is the virion. The protein localises to the host cytoplasm. Its function is as follows. Minor structural protein that forms a portal-like structure at a unique three-fold axis of symmetry, following binding to the host receptor. The virion attaches to feline junctional adhesion molecule A (F11R). Once attached, the virion is endocytosed. Acidification of the endosome induces conformational change of capsid protein thereby injecting virus genomic RNA into host cytoplasm. The channel formed by VP2 may allow the delivery of the viral genome through the host endosomal membrane. This chain is Minor capsid protein VP2, found in Feline calicivirus (strain CFI/68 FIV) (FCV).